The chain runs to 245 residues: Sec-independent protein translocase protein TatC (245 aa).

6 helical membrane passes run 17 to 37 (FISV…RSYI), 73 to 93 (FFAA…KFVA), 107 to 127 (FVSF…FVVV), 159 to 179 (VVVA…FAKI), 191 to 207 (FRIA…FMTP), and 210 to 230 (VLSQ…SILI).

This sequence belongs to the TatC family. The Tat system comprises two distinct complexes: a TatABC complex, containing multiple copies of TatA, TatB and TatC subunits, and a separate TatA complex, containing only TatA subunits. Substrates initially bind to the TatABC complex, which probably triggers association of the separate TatA complex to form the active translocon.

The protein resides in the cell inner membrane. Functionally, part of the twin-arginine translocation (Tat) system that transports large folded proteins containing a characteristic twin-arginine motif in their signal peptide across membranes. Together with TatB, TatC is part of a receptor directly interacting with Tat signal peptides. The protein is Sec-independent protein translocase protein TatC of Campylobacter jejuni subsp. jejuni serotype O:2 (strain ATCC 700819 / NCTC 11168).